Reading from the N-terminus, the 492-residue chain is Glutamyl-tRNA(Gln) amidotransferase subunit A (492 aa).

Residues lysine 78 and serine 158 each act as charge relay system in the active site. The Acyl-ester intermediate role is filled by serine 182.

The protein belongs to the amidase family. GatA subfamily. As to quaternary structure, heterotrimer of A, B and C subunits.

The catalysed reaction is L-glutamyl-tRNA(Gln) + L-glutamine + ATP + H2O = L-glutaminyl-tRNA(Gln) + L-glutamate + ADP + phosphate + H(+). Allows the formation of correctly charged Gln-tRNA(Gln) through the transamidation of misacylated Glu-tRNA(Gln) in organisms which lack glutaminyl-tRNA synthetase. The reaction takes place in the presence of glutamine and ATP through an activated gamma-phospho-Glu-tRNA(Gln). This is Glutamyl-tRNA(Gln) amidotransferase subunit A from Rhodopseudomonas palustris (strain BisB18).